The following is an 826-amino-acid chain: 1,4-alpha-glucan-branching enzyme 1, chloroplastic/amyloplastic (826 aa).

Residues 1 to 58 constitute a chloroplast transit peptide; it reads ATTTTTTHNSKNKQYLAKQKPVELTLGYQNPNGCKVCSFGSKGSIYQKVSSGFKGVSV. The active-site Nucleophile is aspartate 409. Glutamate 464 acts as the Proton donor in catalysis. Positions 782 to 813 are disordered; it reads DTDVARIPDVSMESEDSNLDRIEDNSEDAVDA.

Belongs to the glycosyl hydrolase 13 family. GlgB subfamily. Monomer. As to expression, expressed in roots, leaves, stipules, pods and flowers.

The protein localises to the plastid. It is found in the chloroplast. Its subcellular location is the amyloplast. It carries out the reaction Transfers a segment of a (1-&gt;4)-alpha-D-glucan chain to a primary hydroxy group in a similar glucan chain.. It participates in glycan biosynthesis; starch biosynthesis. Catalyzes the formation of the alpha-1,6-glucosidic linkages in starch by scission of a 1,4-alpha-linked oligosaccharide from growing alpha-1,4-glucan chains and the subsequent attachment of the oligosaccharide to the alpha-1,6 position. May preferentially transfer long chains during branching. This Pisum sativum (Garden pea) protein is 1,4-alpha-glucan-branching enzyme 1, chloroplastic/amyloplastic (SBEII).